A 496-amino-acid polypeptide reads, in one-letter code: Glutamyl-tRNA(Gln) amidotransferase subunit A, mitochondrial (496 aa).

Active-site charge relay system residues include lysine 80 and serine 161. Serine 185 acts as the Acyl-ester intermediate in catalysis.

Belongs to the amidase family. GatA subfamily. Subunit of the heterotrimeric GatCAB amidotransferase (AdT) complex, composed of A, B and C subunits.

Its subcellular location is the mitochondrion. The catalysed reaction is L-glutamyl-tRNA(Gln) + L-glutamine + ATP + H2O = L-glutaminyl-tRNA(Gln) + L-glutamate + ADP + phosphate + H(+). Functionally, allows the formation of correctly charged Gln-tRNA(Gln) through the transamidation of misacylated Glu-tRNA(Gln) in the mitochondria. The reaction takes place in the presence of glutamine and ATP through an activated gamma-phospho-Glu-tRNA(Gln). The chain is Glutamyl-tRNA(Gln) amidotransferase subunit A, mitochondrial from Culex quinquefasciatus (Southern house mosquito).